The chain runs to 233 residues: 7-cyano-7-deazaguanine synthase (233 aa).

7–17 (LSGGLDSAVTS) serves as a coordination point for ATP. Residues Cys195, Cys206, Cys209, and Cys212 each contribute to the Zn(2+) site.

The protein belongs to the QueC family. Requires Zn(2+) as cofactor.

It carries out the reaction 7-carboxy-7-deazaguanine + NH4(+) + ATP = 7-cyano-7-deazaguanine + ADP + phosphate + H2O + H(+). It participates in purine metabolism; 7-cyano-7-deazaguanine biosynthesis. Catalyzes the ATP-dependent conversion of 7-carboxy-7-deazaguanine (CDG) to 7-cyano-7-deazaguanine (preQ(0)). This chain is 7-cyano-7-deazaguanine synthase, found in Methanococcus maripaludis (strain C5 / ATCC BAA-1333).